The chain runs to 89 residues: MANIKSAKKRAKQTVVRNERNTGQRSMLRTAVKKVIKALDANDAAGAEAAFAVAQPILDRFSARGLIHKNKAARHKSRLTARIKAIKAA.

Basic residues predominate over residues 1–12; the sequence is MANIKSAKKRAK. Residues 1–24 are disordered; sequence MANIKSAKKRAKQTVVRNERNTGQ.

The protein belongs to the bacterial ribosomal protein bS20 family.

Binds directly to 16S ribosomal RNA. The chain is Small ribosomal subunit protein bS20 from Xanthomonas campestris pv. campestris (strain 8004).